A 256-amino-acid chain; its full sequence is Probable sulfite/organosulfonate exporter TauE (256 aa).

The next 8 helical transmembrane spans lie at 5-25 (LLLPLLGLQALLGAGTYFQTV), 33-53 (IVMGVTSGLGLAPVATVAAVV), 76-96 (AVAAAAIGILPSVVVGVLVLE), 103-123 (ATLLQLLLGAVILYGGLSAAL), 142-162 (VFGGLLSGMFGVSGPPLIFQF), 172-190 (IRCALILVFTVTSTVRTLF), 199-219 (AAVCVQAAIAVPVVVIATLLG), and 236-256 (FGVLIGIGASLMLPAISAWVL).

The protein belongs to the 4-toluene sulfonate uptake permease (TSUP) (TC 2.A.102) family.

It is found in the cell inner membrane. Its function is as follows. Could be a sulfite/organosulfonate exporter with a wide substrate range, including 3-sulfolactate and 3-sulfopyruvate. In Cupriavidus necator (strain ATCC 17699 / DSM 428 / KCTC 22496 / NCIMB 10442 / H16 / Stanier 337) (Ralstonia eutropha), this protein is Probable sulfite/organosulfonate exporter TauE.